The primary structure comprises 223 residues: 7-cyano-7-deazaguanine synthase (223 aa).

8–18 lines the ATP pocket; sequence LSGGLDSATTL. Zn(2+) contacts are provided by cysteine 187, cysteine 197, cysteine 200, and cysteine 203.

Belongs to the QueC family. It depends on Zn(2+) as a cofactor.

It catalyses the reaction 7-carboxy-7-deazaguanine + NH4(+) + ATP = 7-cyano-7-deazaguanine + ADP + phosphate + H2O + H(+). It functions in the pathway purine metabolism; 7-cyano-7-deazaguanine biosynthesis. In terms of biological role, catalyzes the ATP-dependent conversion of 7-carboxy-7-deazaguanine (CDG) to 7-cyano-7-deazaguanine (preQ(0)). The chain is 7-cyano-7-deazaguanine synthase from Methylococcus capsulatus (strain ATCC 33009 / NCIMB 11132 / Bath).